The sequence spans 361 residues: Chorismate synthase (361 aa).

Positions 48 and 54 each coordinate NADP(+). FMN-binding positions include 131–133 (RSS), 243–244 (NA), G287, 302–306 (KPTSS), and R328.

The protein belongs to the chorismate synthase family. Homotetramer. It depends on FMNH2 as a cofactor.

It carries out the reaction 5-O-(1-carboxyvinyl)-3-phosphoshikimate = chorismate + phosphate. It functions in the pathway metabolic intermediate biosynthesis; chorismate biosynthesis; chorismate from D-erythrose 4-phosphate and phosphoenolpyruvate: step 7/7. Functionally, catalyzes the anti-1,4-elimination of the C-3 phosphate and the C-6 proR hydrogen from 5-enolpyruvylshikimate-3-phosphate (EPSP) to yield chorismate, which is the branch point compound that serves as the starting substrate for the three terminal pathways of aromatic amino acid biosynthesis. This reaction introduces a second double bond into the aromatic ring system. This chain is Chorismate synthase, found in Rhodopseudomonas palustris (strain HaA2).